We begin with the raw amino-acid sequence, 414 residues long: Glutamyl-tRNA reductase (414 aa).

Residues 49 to 52 (TCNR), Ser-108, 113 to 115 (EPQ), and Gln-119 each bind substrate. Cys-50 (nucleophile) is an active-site residue. 188–193 (GAGQTG) is an NADP(+) binding site.

The protein belongs to the glutamyl-tRNA reductase family. Homodimer.

The enzyme catalyses (S)-4-amino-5-oxopentanoate + tRNA(Glu) + NADP(+) = L-glutamyl-tRNA(Glu) + NADPH + H(+). Its pathway is porphyrin-containing compound metabolism; protoporphyrin-IX biosynthesis; 5-aminolevulinate from L-glutamyl-tRNA(Glu): step 1/2. Its function is as follows. Catalyzes the NADPH-dependent reduction of glutamyl-tRNA(Glu) to glutamate 1-semialdehyde (GSA). This chain is Glutamyl-tRNA reductase, found in Francisella tularensis subsp. holarctica (strain LVS).